The following is a 145-amino-acid chain: Arginine repressor (145 aa).

It belongs to the ArgR family.

The protein resides in the cytoplasm. It functions in the pathway amino-acid biosynthesis; L-arginine biosynthesis [regulation]. Regulates arginine biosynthesis genes. The chain is Arginine repressor from Solibacter usitatus (strain Ellin6076).